The primary structure comprises 408 residues: Probable cysteine desulfurase (408 aa).

Residue Lys225 is modified to N6-(pyridoxal phosphate)lysine.

The protein belongs to the class-V pyridoxal-phosphate-dependent aminotransferase family. Csd subfamily. Pyridoxal 5'-phosphate is required as a cofactor.

It catalyses the reaction (sulfur carrier)-H + L-cysteine = (sulfur carrier)-SH + L-alanine. Its function is as follows. Catalyzes the removal of elemental sulfur and selenium atoms from L-cysteine, L-cystine, L-selenocysteine, and L-selenocystine to produce L-alanine. The chain is Probable cysteine desulfurase (csd) from Mycoplasma genitalium (strain ATCC 33530 / DSM 19775 / NCTC 10195 / G37) (Mycoplasmoides genitalium).